The sequence spans 137 residues: Transcription antitermination protein NusB (137 aa).

It belongs to the NusB family.

In terms of biological role, involved in transcription antitermination. Required for transcription of ribosomal RNA (rRNA) genes. Binds specifically to the boxA antiterminator sequence of the ribosomal RNA (rrn) operons. In Proteus mirabilis (strain HI4320), this protein is Transcription antitermination protein NusB.